A 443-amino-acid chain; its full sequence is Serine transporter (443 aa).

A run of 11 helical transmembrane segments spans residues 38–60 (TGWVIMSIGMAIGAGIVFLPVQV), 65–87 (LWVFLLSSVIGYPAMYLFQRLFI), 111–131 (WGILLGALYFVMLVIWMFVYS), 150–170 (GLLSDSPFYGLVLICILVAIS), 183–203 (GMVLTKLLVVAALGVSMVGMW), 215–235 (GLLVKNAIITLPFTLTSILFI), 265–285 (IAFGILFIIVFFYAVSFTLAM), 319–339 (VSVILNIFAVMTAFFGVYLGF), 368–388 (GIMIFAILLAWSAIVLNAPVL), 390–410 (FTSICSPIFGLVGCLIPAWLV), and 422–442 (MSLYLIIVTGLLLCVSPFLAF).

The protein belongs to the amino acid/polyamine transporter 2 family. SdaC/TdcC subfamily.

It localises to the cell inner membrane. Functionally, transports both D- and L-serine; allows growth of strain CFT073 cells normally unable to transport D-serine on that substrate. Transport relies on the H(+) gradient and is not competed by L-threonine. May play a role in L-cysteine detoxification. The chain is Serine transporter from Escherichia coli O157:H7.